A 448-amino-acid polypeptide reads, in one-letter code: Putative carbonic anhydrase 2 (448 aa).

Positions 1–222 (AYRQTENLLY…PAERDVFRII (222 aa)) constitute an Alpha-carbonic anhydrase domain. His19 serves as a coordination point for Zn(2+). Residues Asn139 and Asn198 are each glycosylated (N-linked (GlcNAc...) asparagine). Positions 229-448 (RREEDDERGD…DKGDDKGDDN (220 aa)) are disordered. Residues 245–280 (DDDDNYDDDDYYNDDYSNDDYYDDDYYYDDYDDDTD) show a composition bias toward acidic residues. Composition is skewed to basic and acidic residues over residues 281–334 (DDHK…DDSG) and 342–354 (RDGR…RDRN). A glycan (N-linked (GlcNAc...) asparagine) is linked at Asn314. The span at 357 to 368 (NGNGRENGGVRG) shows a compositional bias: gly residues. Residues 370 to 379 (GNDRDGRRDN) show a composition bias toward basic and acidic residues. Asn385 carries N-linked (GlcNAc...) asparagine glycosylation. Positions 386 to 421 (GTRRGNGDDRGGRRNEDRGENRRGKDDQERESEDGR) are enriched in basic and acidic residues. Residues 422–435 (RRRRRFNGRRRRRG) show a composition bias toward basic residues. Over residues 436 to 448 (RGDDKGDDKGDDN) the composition is skewed to basic and acidic residues.

The protein belongs to the alpha-carbonic anhydrase family. Component of the acid-insoluble and acid-soluble organic matrix of calcified layers of the shell (at protein level).

It is found in the secreted. It catalyses the reaction hydrogencarbonate + H(+) = CO2 + H2O. Functionally, reversible hydration of carbon dioxide. This is Putative carbonic anhydrase 2 from Lottia gigantea (Giant owl limpet).